A 5058-amino-acid chain; its full sequence is ATP-binding cassette sub-family A member 13 (5058 aa).

The next 7 helical transmembrane spans lie at 23–43 (PVLF…LTVL), 3568–3588 (VGFF…ASMV), 3607–3627 (GVHP…VLTI), 3648–3668 (FIVF…SYLL), 3679–3699 (ALCT…LLVL), 3709–3729 (TFLC…ITFL), and 3752–3772 (FGWV…CGWY). In terms of domain architecture, ABC transporter 1 spans 3842-4074 (VTLVSVTKEY…YGQGLRLTLT (233 aa)). 3875–3882 (GTNGAGKT) contributes to the ATP binding site. 7 helical membrane-spanning segments follow: residues 4226-4246 (TLAD…LFMV), 4458-4478 (VALC…SSVV), 4504-4524 (FLYD…VIVA), 4536-4556 (LAAT…WMYL), 4568-4588 (FISY…ITIM), 4607-4627 (VLKW…LVEL), and 4651-4671 (MNFL…LLLL). The region spanning 4718–4956 (LVLYNLSKHY…FGDGYTVKVW (239 aa)) is the ABC transporter 2 domain. 4754-4761 (GVNGAGKS) provides a ligand contact to ATP.

Belongs to the ABC transporter superfamily. As to expression, significantly expressed in the bone marrow, trachea, testis, thyroid and lung as well as in skin fibroblasts.

The protein resides in the cytoplasmic vesicle membrane. It carries out the reaction cholesterol(in) + ATP + H2O = cholesterol(out) + ADP + phosphate + H(+). Its function is as follows. May mediate the cholesterol and gangliosides transport from the plasma membrane to intracellular vesicles in an ATP hydrolysis dependent manner, thus playing a role in their internalization by endocytic retrograde transport and may also participate in the endocytosis of synaptic vesicle in cortical neurons. The sequence is that of ATP-binding cassette sub-family A member 13 from Homo sapiens (Human).